The following is a 139-amino-acid chain: Arsenate reductase (139 aa).

Active-site nucleophile residues include Cys-10, Cys-82, and Cys-89. 2 disulfides stabilise this stretch: Cys-10–Cys-82 and Cys-82–Cys-89.

It belongs to the low molecular weight phosphotyrosine protein phosphatase family. Thioredoxin-coupled ArsC subfamily.

Its subcellular location is the cytoplasm. It catalyses the reaction arsenate + [thioredoxin]-dithiol + H(+) = arsenite + [thioredoxin]-disulfide + H2O. Its function is as follows. Catalyzes the reduction of arsenate [As(V)] to arsenite [As(III)]. The polypeptide is Arsenate reductase (Bacillus licheniformis (strain ATCC 14580 / DSM 13 / JCM 2505 / CCUG 7422 / NBRC 12200 / NCIMB 9375 / NCTC 10341 / NRRL NRS-1264 / Gibson 46)).